The primary structure comprises 556 residues: Urocanate hydratase (556 aa).

NAD(+) contacts are provided by residues 52–53, glutamine 130, 176–178, glutamate 196, arginine 201, 242–243, 263–267, 273–274, and tyrosine 322; these read GG, GMG, NA, QTSAH, and YL. Residue cysteine 410 is part of the active site. Residue glycine 492 participates in NAD(+) binding.

It belongs to the urocanase family. NAD(+) is required as a cofactor.

It is found in the cytoplasm. The enzyme catalyses 4-imidazolone-5-propanoate = trans-urocanate + H2O. It functions in the pathway amino-acid degradation; L-histidine degradation into L-glutamate; N-formimidoyl-L-glutamate from L-histidine: step 2/3. Its function is as follows. Catalyzes the conversion of urocanate to 4-imidazolone-5-propionate. In Shewanella sp. (strain ANA-3), this protein is Urocanate hydratase.